Reading from the N-terminus, the 1009-residue chain is Type VII secretion system accessory factor EsaA (1009 aa).

The chain crosses the membrane as a helical span at residues 7–27; the sequence is IYALIVTLIIIIAIVSMIFFV. Basic and acidic residues predominate over residues 680-697; it reads TFAEEPQEPKIDKGKNDE. Positions 680 to 707 are disordered; that stretch reads TFAEEPQEPKIDKGKNDEFNTMSSNLDK. 5 helical membrane-spanning segments follow: residues 822-842, 869-889, 903-923, 928-948, and 979-999; these read ISPT…AYIF, VITS…VGLI, KFIL…TYLL, SIGM…MNNL, and IGLV…LNMF.

It belongs to the EsaA family. As to quaternary structure, homodimer. Interacts with EssB.

Its subcellular location is the cell membrane. Its function is as follows. Component of the type VII secretion system (Ess). Provides together with EssB and other components such as EssC and EssE a secretion plateform accross the cytoplasmic membrane in the host. The polypeptide is Type VII secretion system accessory factor EsaA (Staphylococcus aureus (strain USA300)).